Reading from the N-terminus, the 95-residue chain is Small ribosomal subunit protein uS19 (95 aa).

Belongs to the universal ribosomal protein uS19 family.

Functionally, protein S19 forms a complex with S13 that binds strongly to the 16S ribosomal RNA. This Bdellovibrio bacteriovorus (strain ATCC 15356 / DSM 50701 / NCIMB 9529 / HD100) protein is Small ribosomal subunit protein uS19.